The sequence spans 329 residues: Capsular polysaccharide phosphotransferase WcwK (329 aa).

It belongs to the stealth family.

The protein is Capsular polysaccharide phosphotransferase WcwK (wcwK) of Streptococcus pneumoniae.